A 90-amino-acid chain; its full sequence is Cell division protein CrgA (90 aa).

A disordered region spans residues 1-25; the sequence is MPKARVTKNETAPVSSNPSANRTPV. The span at 9-22 shows a compositional bias: polar residues; the sequence is NETAPVSSNPSANR. The next 2 helical transmembrane spans lie at 38-58 and 67-87; these read VIMF…YLVG and LGAW…LMTM.

Belongs to the CrgA family.

It localises to the cell membrane. Its function is as follows. Involved in cell division. The protein is Cell division protein CrgA of Corynebacterium glutamicum (strain ATCC 13032 / DSM 20300 / JCM 1318 / BCRC 11384 / CCUG 27702 / LMG 3730 / NBRC 12168 / NCIMB 10025 / NRRL B-2784 / 534).